We begin with the raw amino-acid sequence, 357 residues long: DNA primase small subunit PriS (357 aa).

Residues Asp-105, Asp-107, and Asp-259 contribute to the active site.

The protein belongs to the eukaryotic-type primase small subunit family. Heterodimer of a small subunit (PriS) and a large subunit (PriL). Mg(2+) is required as a cofactor. It depends on Mn(2+) as a cofactor.

In terms of biological role, catalytic subunit of DNA primase, an RNA polymerase that catalyzes the synthesis of short RNA molecules used as primers for DNA polymerase during DNA replication. The small subunit contains the primase catalytic core and has DNA synthesis activity on its own. Binding to the large subunit stabilizes and modulates the activity, increasing the rate of DNA synthesis while decreasing the length of the DNA fragments, and conferring RNA synthesis capability. The DNA polymerase activity may enable DNA primase to also catalyze primer extension after primer synthesis. May also play a role in DNA repair. This is DNA primase small subunit PriS from Methanococcus maripaludis (strain C6 / ATCC BAA-1332).